The chain runs to 362 residues: Phosphoserine aminotransferase (362 aa).

L-glutamate is bound by residues S9 and R42. Pyridoxal 5'-phosphate-binding positions include 76–77 (GR), W102, T153, D174, and Q197. K198 is subject to N6-(pyridoxal phosphate)lysine. Residue 239-240 (NT) participates in pyridoxal 5'-phosphate binding.

This sequence belongs to the class-V pyridoxal-phosphate-dependent aminotransferase family. SerC subfamily. In terms of assembly, homodimer. Pyridoxal 5'-phosphate serves as cofactor.

The protein resides in the cytoplasm. The enzyme catalyses O-phospho-L-serine + 2-oxoglutarate = 3-phosphooxypyruvate + L-glutamate. The catalysed reaction is 4-(phosphooxy)-L-threonine + 2-oxoglutarate = (R)-3-hydroxy-2-oxo-4-phosphooxybutanoate + L-glutamate. It participates in amino-acid biosynthesis; L-serine biosynthesis; L-serine from 3-phospho-D-glycerate: step 2/3. The protein operates within cofactor biosynthesis; pyridoxine 5'-phosphate biosynthesis; pyridoxine 5'-phosphate from D-erythrose 4-phosphate: step 3/5. Its function is as follows. Catalyzes the reversible conversion of 3-phosphohydroxypyruvate to phosphoserine and of 3-hydroxy-2-oxo-4-phosphonooxybutanoate to phosphohydroxythreonine. The polypeptide is Phosphoserine aminotransferase (Escherichia fergusonii (strain ATCC 35469 / DSM 13698 / CCUG 18766 / IAM 14443 / JCM 21226 / LMG 7866 / NBRC 102419 / NCTC 12128 / CDC 0568-73)).